The chain runs to 78 residues: MHEKLLTLCDCAFEARLIELEMRVSFQEQALTEISEALAETRLIGARNAELMRHLLEELGKVRNTLYEHPIDEPPPHY.

Belongs to the SlyX family.

This Xylella fastidiosa (strain M23) protein is Protein SlyX homolog.